The primary structure comprises 365 residues: tRNA-specific 2-thiouridylase MnmA (365 aa).

ATP is bound by residues 6-13 (AMSGGVDS) and L32. The Nucleophile role is filled by C101. A disulfide bridge links C101 with C199. Residue G125 participates in ATP binding. An interaction with tRNA region spans residues 149–151 (KDQ). The active-site Cysteine persulfide intermediate is C199.

The protein belongs to the MnmA/TRMU family.

It is found in the cytoplasm. The catalysed reaction is S-sulfanyl-L-cysteinyl-[protein] + uridine(34) in tRNA + AH2 + ATP = 2-thiouridine(34) in tRNA + L-cysteinyl-[protein] + A + AMP + diphosphate + H(+). In terms of biological role, catalyzes the 2-thiolation of uridine at the wobble position (U34) of tRNA, leading to the formation of s(2)U34. The chain is tRNA-specific 2-thiouridylase MnmA from Corynebacterium glutamicum (strain R).